The primary structure comprises 507 residues: MDVSNETVERTDLRTPLVDPADTEVKPLPEVGLESVLTESSLSYRRRVYLGACIELKVLFRLALPAILIYLVNSGMGISARVFAGHVGSQELAAASIGNSCFNLVYGLMLGMGSAVETLCGQAYGAHRYEMLGIYLQRATIVLALVGLPMTLLYTFSYPILILLGEPKTVSYMGSKYIAGLIPQIFAYAVNFTAQKFLQAQSVVAPSAFISAAALILQILLTWITVYVMDMGFMGIAYVLTISWWVIVGSQCFYIAVSPKFRHTWTGLSWRSLQGLWSFFKLSAGSAVMICLEMWYSQILVLLAGLLENPARSLDSLSICMSISALSFMVSVGFNAAVSVRTSNELGAGNPKSAWFSTWTATFVSFVISVTEALAVIWFRDYVSYIFTEDADVAKAVSDLCPFLAITIILNGIQPVLSGVAVGCGWQTYVAYVNVGCYYVVGIPVGCILGFTFDFQAKGIWTGMIGGTLMQTLILLYVTYRTDWDKEVEKARKRLDLWDDKKEPLQN.

12 consecutive transmembrane segments (helical) span residues 58–78, 92–112, 141–161, 178–198, 209–229, 233–253, 287–307, 318–338, 359–379, 403–423, 433–453, and 459–479; these read VLFR…GMGI, LAAA…MLGM, IVLA…YPIL, IAGL…QKFL, FISA…VYVM, FMGI…SQCF, AVMI…AGLL, SICM…NAAV, WTAT…VIWF, FLAI…VAVG, VNVG…GFTF, and GIWT…LYVT.

It belongs to the multi antimicrobial extrusion (MATE) (TC 2.A.66.1) family.

Its subcellular location is the membrane. This is Protein DETOXIFICATION 39 from Arabidopsis thaliana (Mouse-ear cress).